The following is a 203-amino-acid chain: MAAAAVSSAKRSLRGELKQRLRAMSAEERLRQSRVLSQKVIAHSEYQKSKRISIFLSMQDEIETEEIIKDIFQRGKICFIPRYRFQSNHMDMVRIESPEEISLLPKTSWNIPQPGEGDVREEALSTGGLDLIFMPGLGFDKHGNRLGRGKGYYDAYLKRCLQHQEVKPYTLALAFKEQICLQVPVNENDMKVDEVLYEDSSTA.

Alanine 2 carries the post-translational modification N-acetylalanine. ATP is bound by residues 10 to 14 (KRSLR) and arginine 14. Residues leucine 56, glutamate 61, and 148–152 (RGKGY) contribute to the substrate site. Residue 145–153 (RLGRGKGYY) participates in ATP binding. Mg(2+) is bound by residues aspartate 154 and aspartate 189.

Belongs to the 5-formyltetrahydrofolate cyclo-ligase family. Monomer. Mg(2+) is required as a cofactor.

The protein localises to the cytoplasm. The catalysed reaction is (6S)-5-formyl-5,6,7,8-tetrahydrofolate + ATP = (6R)-5,10-methenyltetrahydrofolate + ADP + phosphate. Contributes to tetrahydrofolate metabolism. Helps regulate carbon flow through the folate-dependent one-carbon metabolic network that supplies carbon for the biosynthesis of purines, thymidine and amino acids. Catalyzes the irreversible conversion of 5-formyltetrahydrofolate (5-FTHF) to yield 5,10-methenyltetrahydrofolate. The polypeptide is 5-formyltetrahydrofolate cyclo-ligase (MTHFS) (Homo sapiens (Human)).